The chain runs to 474 residues: Proline--tRNA ligase (474 aa).

The protein belongs to the class-II aminoacyl-tRNA synthetase family. ProS type 3 subfamily. As to quaternary structure, homodimer.

It localises to the cytoplasm. It carries out the reaction tRNA(Pro) + L-proline + ATP = L-prolyl-tRNA(Pro) + AMP + diphosphate. Catalyzes the attachment of proline to tRNA(Pro) in a two-step reaction: proline is first activated by ATP to form Pro-AMP and then transferred to the acceptor end of tRNA(Pro). This Phytoplasma australiense protein is Proline--tRNA ligase.